Consider the following 283-residue polypeptide: Probable endonuclease 4 (283 aa).

Zn(2+) is bound by residues H67, H107, E144, D178, H181, H215, D228, H230, and E260.

Belongs to the AP endonuclease 2 family. It depends on Zn(2+) as a cofactor.

It carries out the reaction Endonucleolytic cleavage to 5'-phosphooligonucleotide end-products.. Functionally, endonuclease IV plays a role in DNA repair. It cleaves phosphodiester bonds at apurinic or apyrimidinic (AP) sites, generating a 3'-hydroxyl group and a 5'-terminal sugar phosphate. This is Probable endonuclease 4 from Geobacter sp. (strain M21).